Consider the following 122-residue polypeptide: Large ribosomal subunit protein uL18 (122 aa).

This sequence belongs to the universal ribosomal protein uL18 family. In terms of assembly, part of the 50S ribosomal subunit; part of the 5S rRNA/L5/L18/L25 subcomplex. Contacts the 5S and 23S rRNAs.

This is one of the proteins that bind and probably mediate the attachment of the 5S RNA into the large ribosomal subunit, where it forms part of the central protuberance. In Synechococcus sp. (strain JA-2-3B'a(2-13)) (Cyanobacteria bacterium Yellowstone B-Prime), this protein is Large ribosomal subunit protein uL18.